The sequence spans 365 residues: Bifunctional chorismate mutase/prephenate dehydratase (365 aa).

One can recognise a Chorismate mutase domain in the interval Met1–Lys96. Substrate is bound by residues Arg11, Arg28, Lys39, and Glu57. The Prephenate dehydratase domain occupies Val97–Asn272. Residues Ser284 to Pro361 enclose the ACT domain.

It localises to the cytoplasm. It carries out the reaction chorismate = prephenate. The enzyme catalyses prephenate + H(+) = 3-phenylpyruvate + CO2 + H2O. It functions in the pathway amino-acid biosynthesis; L-phenylalanine biosynthesis; phenylpyruvate from prephenate: step 1/1. The protein operates within metabolic intermediate biosynthesis; prephenate biosynthesis; prephenate from chorismate: step 1/1. In terms of biological role, catalyzes the Claisen rearrangement of chorismate to prephenate and the decarboxylation/dehydration of prephenate to phenylpyruvate. The chain is Bifunctional chorismate mutase/prephenate dehydratase (pheA) from Pseudomonas aeruginosa (strain ATCC 15692 / DSM 22644 / CIP 104116 / JCM 14847 / LMG 12228 / 1C / PRS 101 / PAO1).